Consider the following 75-residue polypeptide: Defense protein 6 (75 aa).

Residues 1 to 20 (MKTCLVFAFFLVAVFAAVQA) form the signal peptide. The propeptide occupies 21-32 (EENDSPQTLPRR). Disulfide bonds link C44/C63, C49/C68, and C53/C70.

It belongs to the invertebrate defensin family.

It is found in the secreted. Has antibacterial activity. The polypeptide is Defense protein 6 (Lonomia obliqua (Moth)).